The chain runs to 206 residues: uncharacterized protein (206 aa).

In terms of domain architecture, YrdC-like spans 14-200 (QRLINQAVEI…TPVVVREGVG (187 aa)).

Belongs to the SUA5 family.

This is an uncharacterized protein from Escherichia coli O6:H1 (strain CFT073 / ATCC 700928 / UPEC).